Reading from the N-terminus, the 419-residue chain is LWamide neuropeptides (419 aa).

Positions 1–27 (MEKEMRNLMLLVLLTVILDNGIGKCNA) are cleaved as a signal peptide. The interval 27–48 (AKSEEDQDGNARNNRIDKNDDN) is disordered. The propeptide occupies 28–104 (KSEEDQDGNA…ENLDIDSTVQ (77 aa)). Residue Trp-110 is modified to Tryptophan amide. A propeptide spanning residues 113–140 (EADFDNTRAHDSAQISDEKQSGLWVGDA) is cleaved from the precursor. Positions 120 to 132 (RAHDSAQISDEKQ) are enriched in basic and acidic residues. Residues 120–332 (RAHDSAQISD…PGLWGRQVED (213 aa)) form a disordered region. Trp-146 bears the Tryptophan amide mark. Positions 149-150 (DA) are excised as a propeptide. Trp-156 bears the Tryptophan amide mark. Positions 159–160 (DA) are excised as a propeptide. The residue at position 166 (Trp-166) is a Tryptophan amide. Positions 169–170 (DA) are excised as a propeptide. At Trp-176 the chain carries Tryptophan amide. Residues 179–180 (DA) constitute a propeptide that is removed on maturation. Trp-186 carries the post-translational modification Tryptophan amide. A propeptide spanning residues 189–190 (DA) is cleaved from the precursor. Trp-196 carries the tryptophan amide modification. Residues 199 to 200 (DA) constitute a propeptide that is removed on maturation. Trp-206 carries the post-translational modification Tryptophan amide. Positions 209–210 (DA) are excised as a propeptide. Residue Trp-216 is modified to Tryptophan amide. The propeptide at 218–220 (GDA) is seems to have a sequencing error or a mutation in position 218; Gly instead of Arg. Trp-226 is modified (tryptophan amide). Residues 229 to 230 (DA) constitute a propeptide that is removed on maturation. Position 236 is a tryptophan amide (Trp-236). The propeptide occupies 239-240 (DA). Trp-246 bears the Tryptophan amide mark. The propeptide occupies 249–250 (DA). Trp-256 is subject to Tryptophan amide. Residues 259 to 260 (DA) constitute a propeptide that is removed on maturation. Position 266 is a tryptophan amide (Trp-266). A propeptide spanning residues 269-270 (DA) is cleaved from the precursor. Trp-276 bears the Tryptophan amide mark. A propeptide spanning residues 279 to 280 (DT) is cleaved from the precursor. Trp-286 bears the Tryptophan amide mark. Residues 289–290 (DA) constitute a propeptide that is removed on maturation. A Tryptophan amide modification is found at Trp-296. Propeptides lie at residues 299-300 (DA) and 309-320 (DNNVIKSRSDDA). Residue Trp-326 is modified to Tryptophan amide. Residues 329 to 419 (QVEDGPTKIW…RRNNKKNNKF (91 aa)) constitute a propeptide that is removed on maturation.

Belongs to the LWamide neuropeptide family. In terms of tissue distribution, in planula larvae, expressed in a narrow ring of ectodermal neurosensory cells around the widest circumference at the anterior of the larvae. In primary polyps, expression is confined to endodermal cells of the hypostome. In mature polyps, expression is strong in the epidermis from the tentacle level to the base of the polyp and weak in the gastrodermal cells in the apical hypostome.

The protein resides in the secreted. Functionally, LWamide peptides may be involved in induction of metamorphosis. The chain is LWamide neuropeptides from Hydractinia echinata (Snail fur).